Here is a 456-residue protein sequence, read N- to C-terminus: uncharacterized protein (456 aa).

The TRAM domain occupies 3–61 (TIKKNEVKTGKVIDLTHEGHGVVKVDRYPIFIPNALIDEEIKFKLIKVKKNFAIGKLIE). [4Fe-4S] cluster-binding residues include C74, C80, C83, and C162. S-adenosyl-L-methionine contacts are provided by Q286, Y315, E336, and D384. Residue C411 is the Nucleophile of the active site.

Belongs to the class I-like SAM-binding methyltransferase superfamily. RNA M5U methyltransferase family.

This is an uncharacterized protein from Staphylococcus epidermidis (strain ATCC 35984 / DSM 28319 / BCRC 17069 / CCUG 31568 / BM 3577 / RP62A).